A 23-amino-acid chain; its full sequence is Septenin 2a (23 aa).

As to expression, expressed in skin glands.

Its subcellular location is the secreted. May act as an antimicrobial peptide. The sequence is that of Septenin 2a from Osteopilus septentrionalis (Cuban treefrog).